The following is a 287-amino-acid chain: U1 small nuclear ribonucleoprotein A (287 aa).

Residues 16 to 95 (HTIYINNLNE…KPMRIQYAKT (80 aa)) enclose the RRM 1 domain. N6-acetyllysine is present on lysine 66. Residues 106 to 134 (TYVERDRKREKRKPKSQETPAAKKAVQGG) form a disordered region. Residues 125–134 (PAAKKAVQGG) are compositionally biased toward low complexity. Arginine 157 is subject to Omega-N-methylarginine. The region spanning 213-287 (HILFLTNLPE…NAMKISFAKK (75 aa)) is the RRM 2 domain.

This sequence belongs to the RRM U1 A/B'' family. U1 snRNP is composed of the 7 core Sm proteins SNRPB, SNRPD1, SNRPD2, SNRPD3, SNRPE, SNRPF and SNRPG that assemble in a heptameric protein ring on the Sm site of the small nuclear RNA to form the core snRNP, and at least three U1 snRNP-specific proteins SNRNP70/U1-70K, SNRPA/U1-A and SNRPC/U1-C. Interacts with SFPQ; component of a snRNP-free complex with SFPQ. Interacts with IVNS1ABP (via BACK domain); the interaction is indirect.

Its subcellular location is the nucleus. Its function is as follows. Component of the spliceosomal U1 snRNP, which is essential for recognition of the pre-mRNA 5' splice-site and the subsequent assembly of the spliceosome. U1 snRNP is the first snRNP to interact with pre-mRNA. This interaction is required for the subsequent binding of U2 snRNP and the U4/U6/U5 tri-snRNP. SNRPA binds stem loop II of U1 snRNA. In a snRNP-free form (SF-A) may be involved in coupled pre-mRNA splicing and polyadenylation process. May bind preferentially to the 5'-UGCAC-3' motif on RNAs. This is U1 small nuclear ribonucleoprotein A (Snrpa) from Mus musculus (Mouse).